The sequence spans 66 residues: Omega conotoxin-CVIE (66 aa).

A signal peptide spans 1–17; that stretch reads VVIVAVLLLTACQLITA. Positions 18–40 are excised as a propeptide; the sequence is NDSRGTQKHRALRSDTKLSMSTR. Cystine bridges form between C41-C56, C48-C60, and C55-C65. C65 is subject to Cysteine amide.

Belongs to the conotoxin O1 superfamily. Expressed by the venom duct.

It localises to the secreted. Omega-conotoxins act at presynaptic membranes, they bind and block voltage-gated calcium channels. This toxin blocks N-type calcium channels (Cav2.2/CACNA1B). It shows a higher potency when Cav2.2/CACNA1B is only expressed with the ancillary subunit CACNB3 (IC(50)=0.12 nM) than on Cav2.2/CACNA1B expressed with the ancillary subunits CACNA2D1 and CACNB3 (IC(50)=2.6 nM). The Cav2.2/CACNA1B block by this toxin is voltage-independent, whereas the recovery from toxin block is voltage-dependent. There is a low recovery at physiological membrane potential and a high recovery with hyperpolarized potential. This indicates that the toxin has a higher affinity for Cav2.2/CACNA1B in the inactivated state. It is noteworthy that ancillary subunits beta modulate recovery from this toxin block. Cav2.2/CACNA1B expressed with the ancillary subunit CACNB2a (isoform 2a) almost recover completely from this toxin block, whereas Cav2.2/CACNA1B expressed with CACNB3 exhibits relatively weak recovery. Inhibition by this toxin of excitatory synaptic transmission is reversible. In vivo, when tested on rat model of persistent pain, this toxin blocks chronic pain behavior. The chain is Omega conotoxin-CVIE from Conus catus (Cat cone).